Reading from the N-terminus, the 428-residue chain is MNAKVLEKKFIVPFVLITSLFALWGFANDITNPMVAVFQTVMEIPASEAALVQLAFYGGYGTMAIPAALFASRYSYKAGILLGLALYAIGAFLFWPAAQYEIFNFFLVSLYILTFGLAFLETTANPYILAMGDPQTATRRLNFAQSFNPLGSITGMFVASQLVLTNLESDKRDAAGNLIFHTLSEAEKMSIRTHDLAEIRDPYIALGFVVVAVFIIIGLKKMPAVKIEEAGQISFKTAVSRLAQKAKYREGVIAQAFYVGVQIMCWTFIVQYAERLGFTKAEGQNFNIIAMAIFISSRFISTALMKYLKAEFMLMLFAIGGFLSILGVIFIDGVWGLYCLILTSGFMPLMFPTIYGIALYGLKEESTLGAAGLVMAIVGGALMPPLQGMIIDQGEVMGLPAVNFSFILPLICFVVIAIYGFRAWKILK.

The next 12 helical transmembrane spans lie at phenylalanine 10–isoleucine 30, leucine 51–alanine 71, alanine 78–alanine 98, tyrosine 100–leucine 120, phenylalanine 147–leucine 167, isoleucine 204–alanine 224, glutamate 250–valine 270, isoleucine 288–leucine 308, glutamate 311–isoleucine 331, cysteine 339–leucine 359, alanine 371–isoleucine 391, and alanine 401–phenylalanine 421.

Belongs to the major facilitator superfamily. FHS transporter (TC 2.A.1.7) family.

It is found in the cell inner membrane. The catalysed reaction is L-fucose(in) + H(+)(in) = L-fucose(out) + H(+)(out). Its function is as follows. Mediates the uptake of L-fucose across the boundary membrane with the concomitant transport of protons into the cell (symport system). This chain is L-fucose-proton symporter (fucP), found in Haemophilus influenzae (strain ATCC 51907 / DSM 11121 / KW20 / Rd).